Consider the following 661-residue polypeptide: B3 domain-containing protein Os12g0591400 (661 aa).

4 consecutive DNA-binding regions (TF-B3) follow at residues 2 to 95 (GDQK…FNPS), 197 to 290 (KTRC…FNPS), 437 to 535 (LYIT…FKES), and 562 to 658 (TNLT…IRKG).

It localises to the nucleus. In Oryza sativa subsp. japonica (Rice), this protein is B3 domain-containing protein Os12g0591400.